The sequence spans 341 residues: Methionine import ATP-binding protein MetN 3 (341 aa).

The 240-residue stretch at 2 to 241 (ILLENVKKIY…PQQDITKRFV (240 aa)) folds into the ABC transporter domain. 38–45 (GYSGAGKS) contacts ATP.

The protein belongs to the ABC transporter superfamily. Methionine importer (TC 3.A.1.24) family. In terms of assembly, the complex is composed of two ATP-binding proteins (MetN), two transmembrane proteins (MetI) and a solute-binding protein (MetQ).

The protein resides in the cell membrane. It catalyses the reaction L-methionine(out) + ATP + H2O = L-methionine(in) + ADP + phosphate + H(+). It carries out the reaction D-methionine(out) + ATP + H2O = D-methionine(in) + ADP + phosphate + H(+). Part of the ABC transporter complex MetNIQ involved in methionine import. Responsible for energy coupling to the transport system. This Bacillus cereus (strain ATCC 10987 / NRS 248) protein is Methionine import ATP-binding protein MetN 3.